Reading from the N-terminus, the 236-residue chain is Orotidine 5'-phosphate decarboxylase (236 aa).

Substrate is bound by residues D17, K39, 66–75, T125, R186, Q195, G215, and R216; that span reads DLKFHDIPNT. The Proton donor role is filled by K68.

The protein belongs to the OMP decarboxylase family. Type 1 subfamily. As to quaternary structure, homodimer.

The enzyme catalyses orotidine 5'-phosphate + H(+) = UMP + CO2. The protein operates within pyrimidine metabolism; UMP biosynthesis via de novo pathway; UMP from orotate: step 2/2. Functionally, catalyzes the decarboxylation of orotidine 5'-monophosphate (OMP) to uridine 5'-monophosphate (UMP). This Buchnera aphidicola subsp. Acyrthosiphon pisum (strain APS) (Acyrthosiphon pisum symbiotic bacterium) protein is Orotidine 5'-phosphate decarboxylase.